Here is a 503-residue protein sequence, read N- to C-terminus: AMP phosphorylase (503 aa).

AMP is bound by residues G168, 194–199, and T203; that span reads SRAITS. D256 serves as the catalytic Proton donor. The AMP site is built by S264 and K288.

This sequence belongs to the thymidine/pyrimidine-nucleoside phosphorylase family. Type 2 subfamily.

It carries out the reaction AMP + phosphate = alpha-D-ribose 1,5-bisphosphate + adenine. The enzyme catalyses CMP + phosphate = cytosine + alpha-D-ribose 1,5-bisphosphate. It catalyses the reaction UMP + phosphate = alpha-D-ribose 1,5-bisphosphate + uracil. Catalyzes the conversion of AMP and phosphate to adenine and ribose 1,5-bisphosphate (R15P). Exhibits phosphorylase activity toward CMP and UMP in addition to AMP. Functions in an archaeal AMP degradation pathway, together with R15P isomerase and RubisCO. The polypeptide is AMP phosphorylase (deoA) (Pyrococcus abyssi (strain GE5 / Orsay)).